The chain runs to 315 residues: Porphobilinogen deaminase (315 aa).

Residue cysteine 251 is modified to S-(dipyrrolylmethanemethyl)cysteine.

This sequence belongs to the HMBS family. In terms of assembly, monomer. It depends on dipyrromethane as a cofactor.

The enzyme catalyses 4 porphobilinogen + H2O = hydroxymethylbilane + 4 NH4(+). It participates in porphyrin-containing compound metabolism; protoporphyrin-IX biosynthesis; coproporphyrinogen-III from 5-aminolevulinate: step 2/4. Functionally, tetrapolymerization of the monopyrrole PBG into the hydroxymethylbilane pre-uroporphyrinogen in several discrete steps. In Sphingopyxis alaskensis (strain DSM 13593 / LMG 18877 / RB2256) (Sphingomonas alaskensis), this protein is Porphobilinogen deaminase.